Here is a 536-residue protein sequence, read N- to C-terminus: Pre-mRNA-splicing factor SLU7-B (536 aa).

Residues 1 to 42 (MATASVAFKSREDHRKKLELEEARKAGLAPAEVDEDGKEINP) form a disordered region. Over residues 9–25 (KSREDHRKKLELEEARK) the composition is skewed to basic and acidic residues. The CCHC-type zinc finger occupies 96 to 109 (CINCGAMTHSSKAC). 2 disordered regions span residues 176–201 (LKKLEEKNNNENGDDATSDGEEDLDD) and 488–507 (KEDLSRREEKDERKRKYNVN). Acidic residues predominate over residues 187-200 (NGDDATSDGEEDLD). Residue Ser193 is modified to Phosphoserine. Residues 486–493 (LKKEDLSR) carry the Nuclear localization signal motif. A compositionally biased stretch (basic and acidic residues) spans 488-501 (KEDLSRREEKDERK).

This sequence belongs to the SLU7 family. Interacts with PHYB in photobodies under red light.

It localises to the nucleus. Functionally, participates in the second catalytic step of pre-mRNA splicing, when the free hydroxyl group of exon I attacks the 3'-splice site to generate spliced mRNA and the excised lariat intron. Splicing factor acting as a negative regulator of seedling photomorphogenesis by antagonizing PHYB signaling to promote light-induced hypocotyl elongation. Prevents the accumulation of functionally spliced RVE8a form, a circadian clock regulator mediating the transcriptional activation of clock genes containing evening elements (EE), but promotes PIF4 expression to fine-tune hypocotyl elongation in the light. Together with SMP1, involved in the timing of cell cycle arrest during leaf development, in a STRUWWELPETER (SWP) dependent manner; promotes cell proliferation in developing organs. This is Pre-mRNA-splicing factor SLU7-B from Arabidopsis thaliana (Mouse-ear cress).